Consider the following 610-residue polypeptide: DNA replication regulator sld2 (610 aa).

Positions 28 to 42 (WAQKNDGKKPSREAI) are enriched in basic and acidic residues. Disordered stretches follow at residues 28–115 (WAQK…AVHE), 127–261 (SPAV…ERSV), and 338–610 (EQGG…RRRR). Composition is skewed to polar residues over residues 86-110 (ETSLPSASTPSKRNRSAATPKSQHY) and 232-261 (TKTSTPLNKNTGNSPSKNNLTKTPSGERSV). Acidic residues-rich tracts occupy residues 373–386 (VPEEENSFEEDEAA) and 414–428 (FDDENFYDSQDEEDL). Basic residues predominate over residues 442-464 (VFKKKGQKRTTRKVNMRPTRTKR). The segment covering 470 to 480 (AEEEDDGEEEH) has biased composition (acidic residues). Over residues 493 to 503 (KNLDGDDHHTL) the composition is skewed to basic and acidic residues. Residues 514–527 (EFDDGSEGEDEEAE) show a composition bias toward acidic residues. A compositionally biased stretch (basic and acidic residues) spans 544-573 (SAKEKTKKDATTETKKKKGTKEGGDEEPAK).

This sequence belongs to the SLD2 family.

Its subcellular location is the cytoplasm. The protein localises to the nucleus. Functionally, has a role in the initiation of DNA replication. Required at S-phase checkpoint. The sequence is that of DNA replication regulator sld2 (drc-4) from Neurospora crassa (strain ATCC 24698 / 74-OR23-1A / CBS 708.71 / DSM 1257 / FGSC 987).